A 338-amino-acid chain; its full sequence is tRNA N6-adenosine threonylcarbamoyltransferase (338 aa).

Positions 112 and 116 each coordinate Fe cation. Substrate contacts are provided by residues 135–139 (LVSGG), Asp168, Gly181, and Asn273. Position 301 (Asp301) interacts with Fe cation.

Belongs to the KAE1 / TsaD family. The cofactor is Fe(2+).

Its subcellular location is the cytoplasm. The enzyme catalyses L-threonylcarbamoyladenylate + adenosine(37) in tRNA = N(6)-L-threonylcarbamoyladenosine(37) in tRNA + AMP + H(+). Required for the formation of a threonylcarbamoyl group on adenosine at position 37 (t(6)A37) in tRNAs that read codons beginning with adenine. Is involved in the transfer of the threonylcarbamoyl moiety of threonylcarbamoyl-AMP (TC-AMP) to the N6 group of A37, together with TsaE and TsaB. TsaD likely plays a direct catalytic role in this reaction. This chain is tRNA N6-adenosine threonylcarbamoyltransferase, found in Buchnera aphidicola subsp. Baizongia pistaciae (strain Bp).